Consider the following 110-residue polypeptide: Early nodulin-12A (110 aa).

An N-terminal signal peptide occupies residues 1–24 (MASFFLSSLVLFLAALILVPQGLA). The segment at 31–110 (VYEPPVNGPP…HPTEEHNIHF (80 aa)) is disordered. Residues 32-43 (YEPPVNGPPVNK) are compositionally biased toward pro residues. 3 repeat units span residues 34–38 (PPVNG), 39–43 (PPVNK), and 44–48 (PPQKE). The tract at residues 34 to 88 (PPVNGPPVNKPPQKETPVHKPPQKETPVHKPPQKEPPRHKPPQKEPPRHKPPHKK) is 11 X 5 AA approximate tandem repeats of P-P-[VQRH]-[NKH]-[GKE]. Over residues 45 to 81 (PQKETPVHKPPQKETPVHKPPQKEPPRHKPPQKEPPR) the composition is skewed to basic and acidic residues. A 4; approximate repeat occupies 49–53 (TPVHK). Repeat 5 spans residues 54-58 (PPQKE). A 6; approximate repeat occupies 59–63 (TPVHK). Repeat copies occupy residues 64–68 (PPQKE), 69–73 (PPRHK), 74–78 (PPQKE), 79–83 (PPRHK), and 84–88 (PPHKK). Over residues 82 to 93 (HKPPHKKSHLHV) the composition is skewed to basic residues. Residues 101–110 (HPTEEHNIHF) are compositionally biased toward basic and acidic residues.

This sequence belongs to the plant proline-rich protein superfamily. ENOD12 family. In terms of tissue distribution, root nodules, stem and flower.

The protein localises to the secreted. The protein resides in the cell wall. Functionally, involved in the infection process during the plant-rhizobium interaction. The sequence is that of Early nodulin-12A (ENOD12A) from Pisum sativum (Garden pea).